Reading from the N-terminus, the 520-residue chain is GMP synthase [glutamine-hydrolyzing] (520 aa).

A Glutamine amidotransferase type-1 domain is found at 12–202; sequence KIIVLDFGSQ…AFDVCGCTGD (191 aa). Cysteine 89 serves as the catalytic Nucleophile. Residues histidine 176 and glutamate 178 contribute to the active site. The GMPS ATP-PPase domain occupies 203–395; it reads WSMENFIDME…LGMPDAIVWR (193 aa). 230–236 lines the ATP pocket; sequence SGGVDSS.

As to quaternary structure, homodimer.

It carries out the reaction XMP + L-glutamine + ATP + H2O = GMP + L-glutamate + AMP + diphosphate + 2 H(+). It participates in purine metabolism; GMP biosynthesis; GMP from XMP (L-Gln route): step 1/1. Functionally, catalyzes the synthesis of GMP from XMP. This Enterococcus faecalis (strain ATCC 700802 / V583) protein is GMP synthase [glutamine-hydrolyzing].